The following is a 432-amino-acid chain: UPF0597 protein APL_1605 (432 aa).

The protein belongs to the UPF0597 family.

The sequence is that of UPF0597 protein APL_1605 from Actinobacillus pleuropneumoniae serotype 5b (strain L20).